Reading from the N-terminus, the 322-residue chain is Mas-related G-protein coupled receptor member X3 (322 aa).

Residues 1 to 31 (MDSTIPVLGTELTPINGREETPCYKQTLSFT) are Extracellular-facing. The helical transmembrane segment at 32–52 (GLTCIVSLVALTGNAVVLWLL) threads the bilayer. Residues 53–60 (GCRMRRNA) lie on the Cytoplasmic side of the membrane. A helical membrane pass occupies residues 61–81 (VSIYILNLVAADFLFLSGHII). Residues 82 to 96 (CSPLRLINIRHPISK) lie on the Extracellular side of the membrane. A helical membrane pass occupies residues 97–117 (ILSPVMTFPYFIGLSMLSAIS). The Cytoplasmic segment spans residues 118–140 (TERCLSILWPIWYHCRRPRYLSS). Residues 141-161 (VMCVLLWALSLLRSILEWMFC) form a helical membrane-spanning segment. Topologically, residues 162-177 (DFLFSGANSVWCETSD) are extracellular. Residues 178–198 (FITIAWLVFLCVVLCGSSLVL) traverse the membrane as a helical segment. The Cytoplasmic portion of the chain corresponds to 199 to 213 (LVRILCGSRKMPLTR). Residues 214–234 (LYVTILLTVLVFLLCGLPFGI) form a helical membrane-spanning segment. The Extracellular segment spans residues 235 to 254 (QWALFSRIHLDWKVLFCHVH). Residues 255–275 (LVSIFLSALNSSANPIIYFFV) traverse the membrane as a helical segment. Over 276–322 (GSFRQRQNRQNLKLVLQRALQDTPEVDEGGGWLPQETLELSGSRLEQ) the chain is Cytoplasmic.

It belongs to the G-protein coupled receptor 1 family. Mas subfamily. As to expression, uniquely localized in a subset of small dorsal root and trigeminal sensory neurons.

The protein resides in the cell membrane. Orphan receptor. Probably involved in the function of nociceptive neurons. May regulate nociceptor function and/or development, including the sensation or modulation of pain. Potently activated by enkephalins. This Homo sapiens (Human) protein is Mas-related G-protein coupled receptor member X3 (MRGPRX3).